Consider the following 159-residue polypeptide: Transmembrane protein 42 (159 aa).

Transmembrane regions (helical) follow at residues 37 to 57 (FWGVFNCLCAGAFGALAAASA), 59 to 79 (LAFGSEVSMGLCVLGIIVMAS), 100 to 120 (IASVTVTFSNILSSAFLGYVL), and 124 to 144 (CQEVLWWGGVFLILCGLTLIH).

The protein resides in the membrane. In Homo sapiens (Human), this protein is Transmembrane protein 42 (TMEM42).